The primary structure comprises 763 residues: MSDGWSDSESAAKAKTGFGSGGGFGGGNNGGSGFGGGKNGGTGFGGGNTGGSGFGGGNTGGSGFGGGKTGGSGFGGGNTCGSGFGGGSTGGSPYGGASSGFGGSTATSGFGSGEKSSAFGGSGGFGGSATGFGSGGGSFGGGNSGFGEGGHGGGERNNNCFNCQQPGHRSSDCPEPRKEREPRVCYNCQQPGHTSRECTEERKPREGRTGGFGGGAGFGNNGGNDGFGGDGGFGGGEERGPMKCFNCKGEGHRSAECPEPPRGCFNCGEQGHRSNECPNPAKPREGVEGEGPKATYVPVEDNMEDVFNMQKISEGLMFNKFFDAEVKLTSSEKTVGIKPCKTFAEANLTETMQKNVAHAGYSKTTPIQQYALPLVHQGYDIMACAQTGSGKTAAFLLPIMTRLIDDNNLNTAGEGGCYPRCIILTPTRELADQIYNEGRKFAYQTMMEIKPVYGGLAVGYNKGQIEKGATIIVGTVGRIKHFCEEGTIKLDKCRFFVLDEADRMIDAMGFGTDIETIVNYDSMPRKENRQTLMFSATFPDSVQEAARAFLRENYVMIAIDKIGAANKCVLQEFERCERSEKKDKLLELLGIDIDSYTTEKSAEVYTKKTMVFVSQRAMADTLASILSSAQVPAITIHGAREQRERSEALRQFRNGSKPVLIATAVAERGLDIKGVDHVINYDMPDNIDDYIHRIGRTGRVGNSGRATSFISEDCSLLSELVGVLADAQQIVPDWMQGAAGGNYGASGFGSSVPTQVPQDEEGW.

Residues 1-30 form a disordered region; the sequence is MSDGWSDSESAAKAKTGFGSGGGFGGGNNG. Residues 18–30 are compositionally biased toward gly residues; the sequence is FGSGGGFGGGNNG. 7 repeat units span residues 24–33, 34–43, 44–53, 54–63, 64–73, 74–83, and 84–93. The tract at residues 24–93 is 7 X 10 AA tandem repeats, Gly-rich; it reads FGGGNNGGSG…FGGGSTGGSP (70 aa). 2 consecutive CCHC-type zinc fingers follow at residues 158-175 and 183-200; these read NNCF…DCPE and RVCY…ECTE. The segment at 193–230 is disordered; sequence HTSRECTEERKPREGRTGGFGGGAGFGNNGGNDGFGGD. Residues 194 to 208 show a composition bias toward basic and acidic residues; it reads TSRECTEERKPREGR. Gly residues predominate over residues 209-230; sequence TGGFGGGAGFGNNGGNDGFGGD. 2 CCHC-type zinc fingers span residues 242 to 259 and 262 to 279; these read MKCF…ECPE and RGCF…ECPN. The short motif at 341–369 is the Q motif element; sequence KTFAEANLTETMQKNVAHAGYSKTTPIQQ. The Helicase ATP-binding domain occupies 372 to 556; sequence LPLVHQGYDI…RAFLRENYVM (185 aa). An ATP-binding site is contributed by 385-392; that stretch reads AQTGSGKT. The Phosphodegron motif lies at 423–427; it reads ILTPT. Residues 499 to 502 carry the DEAD box motif; that stretch reads DEAD. The Helicase C-terminal domain maps to 592–739; it reads DIDSYTTEKS…IVPDWMQGAA (148 aa).

The protein belongs to the DEAD box helicase family. DDX4/VASA subfamily. As to quaternary structure, interacts with csn-5; this may prevent glh-1 degradation induced by kgb-1. Interacts with zyx-1. Interacts (via the N-terminal region containing the four CCHC zinc fingers) with pan-1. Interacts with kgb-1; this may promote glh-1 degradation by the proteasome. In terms of processing, phosphorylated by kgb-1 (in vitro); this may be responsible for its degradation by the proteasome.

Its subcellular location is the cytoplasm. The protein localises to the cytoplasmic granule. It is found in the perinuclear region. The enzyme catalyses ATP + H2O = ADP + phosphate + H(+). Probable ATP-binding RNA helicase. May act redundantly with the P-granule component glh-4 to regulate the formation of the granular structure of P-granules in embryos. Plays a role in positively regulating the localization of pgl-1 to P-granules. May play a role in transgenerational epigenetic inheritance. May protect somatic cells from excessive apoptosis during normal development. The polypeptide is ATP-dependent RNA helicase glh-1 (Caenorhabditis elegans).